The chain runs to 306 residues: D-alanine--D-alanine ligase (306 aa).

Residues 105–300 (KMIWQAAGIS…FDELVIQILE (196 aa)) enclose the ATP-grasp domain. Residue 131 to 186 (TDRLGLPLIIKPAREGSTIGLNKVDYAQDMQSAYQTAAQHDSLVIAEQFIQGIELT) coordinates ATP. The Mg(2+) site is built by D254, E267, and N269.

This sequence belongs to the D-alanine--D-alanine ligase family. Mg(2+) is required as a cofactor. Requires Mn(2+) as cofactor.

It is found in the cytoplasm. The catalysed reaction is 2 D-alanine + ATP = D-alanyl-D-alanine + ADP + phosphate + H(+). The protein operates within cell wall biogenesis; peptidoglycan biosynthesis. In terms of biological role, cell wall formation. This is D-alanine--D-alanine ligase from Nitrosomonas eutropha (strain DSM 101675 / C91 / Nm57).